A 96-amino-acid chain; its full sequence is Putative toxin Y4kP (96 aa).

The protein belongs to the RelE toxin family.

In terms of biological role, toxic component of a type II toxin-antitoxin (TA) system. The sequence is that of Putative toxin Y4kP from Sinorhizobium fredii (strain NBRC 101917 / NGR234).